Here is a 277-residue protein sequence, read N- to C-terminus: Large ribosomal subunit protein mL46 (277 aa).

An N6-succinyllysine modification is found at K217. K228 carries the post-translational modification N6-acetyllysine. K246 carries the N6-succinyllysine modification.

The protein belongs to the mitochondrion-specific ribosomal protein mL46 family. As to quaternary structure, component of the mitochondrial ribosome large subunit (39S) which comprises a 16S rRNA and about 50 distinct proteins.

It is found in the mitochondrion. The protein is Large ribosomal subunit protein mL46 (Mrpl46) of Rattus norvegicus (Rat).